The chain runs to 425 residues: Serine--tRNA ligase (425 aa).

Residues 110 to 134 (NLPSADAPEGKSEADNVEVKRWGEP) form a disordered region. The span at 117 to 134 (PEGKSEADNVEVKRWGEP) shows a compositional bias: basic and acidic residues. L-serine is bound at residue 233-235 (TAE). An ATP-binding site is contributed by 264–266 (RRE). Glu287 serves as a coordination point for L-serine. 351 to 354 (EISS) is an ATP binding site. L-serine is bound at residue Ser385.

It belongs to the class-II aminoacyl-tRNA synthetase family. Type-1 seryl-tRNA synthetase subfamily. Homodimer. The tRNA molecule binds across the dimer.

It is found in the cytoplasm. It carries out the reaction tRNA(Ser) + L-serine + ATP = L-seryl-tRNA(Ser) + AMP + diphosphate + H(+). It catalyses the reaction tRNA(Sec) + L-serine + ATP = L-seryl-tRNA(Sec) + AMP + diphosphate + H(+). The protein operates within aminoacyl-tRNA biosynthesis; selenocysteinyl-tRNA(Sec) biosynthesis; L-seryl-tRNA(Sec) from L-serine and tRNA(Sec): step 1/1. Catalyzes the attachment of serine to tRNA(Ser). Is also able to aminoacylate tRNA(Sec) with serine, to form the misacylated tRNA L-seryl-tRNA(Sec), which will be further converted into selenocysteinyl-tRNA(Sec). The protein is Serine--tRNA ligase of Synechococcus sp. (strain RCC307).